The chain runs to 445 residues: SVP1-like protein 2 (445 aa).

2 WD repeats span residues 218–258 (AHKA…LLKE) and 263–302 (LDRA…EGTL). The disordered stretch occupies residues 301–321 (TLNPANPEDHQSSGSNGHIKA). A compositionally biased stretch (polar residues) spans 312 to 321 (SSGSNGHIKA).

Belongs to the WD repeat PROPPIN family.

The protein localises to the vacuole membrane. It is found in the cytoplasmic vesicle membrane. In terms of biological role, involved in mitochondrial or peroxisomal functions and amino acid signaling pathways. This chain is SVP1-like protein 2 (HSV2), found in Candida glabrata (strain ATCC 2001 / BCRC 20586 / JCM 3761 / NBRC 0622 / NRRL Y-65 / CBS 138) (Yeast).